The sequence spans 728 residues: UvrABC system protein C (728 aa).

Residues 16 to 95 (DSPGVYRFRD…IKEYDPRFNV (80 aa)) form the GIY-YIG domain. In terms of domain architecture, UVR spans 208–243 (GTYLRRLERQMAEAAEEMEYERAARLRDDIGALKKA). Disordered stretches follow at residues 473–535 (ADGE…GRPK) and 689–728 (VNTATGEIMDDDDGAPETTADAPGEPVSAGTPDERRGQER). The segment covering 487 to 505 (GDAAPNGDAAPNDGAAPDD) has biased composition (low complexity).

The protein belongs to the UvrC family. In terms of assembly, interacts with UvrB in an incision complex.

Its subcellular location is the cytoplasm. In terms of biological role, the UvrABC repair system catalyzes the recognition and processing of DNA lesions. UvrC both incises the 5' and 3' sides of the lesion. The N-terminal half is responsible for the 3' incision and the C-terminal half is responsible for the 5' incision. The chain is UvrABC system protein C from Streptomyces coelicolor (strain ATCC BAA-471 / A3(2) / M145).